The chain runs to 67 residues: uncharacterized protein (67 aa).

This is an uncharacterized protein from Acidianus sp. F28 (AFV-2).